The primary structure comprises 311 residues: Probable cell division protein WhiA (311 aa).

A DNA-binding region (H-T-H motif) is located at residues 277–311 (TLKEVADQIPDGPISKSGVNHRFKKLHELAETLKE).

This sequence belongs to the WhiA family.

Functionally, involved in cell division and chromosome segregation. In Lactobacillus helveticus (strain DPC 4571), this protein is Probable cell division protein WhiA.